Consider the following 421-residue polypeptide: Serine hydroxymethyltransferase (421 aa).

Residues Leu123 and Gly127–Leu129 each bind (6S)-5,6,7,8-tetrahydrofolate. Lys232 carries the N6-(pyridoxal phosphate)lysine modification.

The protein belongs to the SHMT family. As to quaternary structure, homodimer. Requires pyridoxal 5'-phosphate as cofactor.

The protein resides in the cytoplasm. It catalyses the reaction (6R)-5,10-methylene-5,6,7,8-tetrahydrofolate + glycine + H2O = (6S)-5,6,7,8-tetrahydrofolate + L-serine. The protein operates within one-carbon metabolism; tetrahydrofolate interconversion. It functions in the pathway amino-acid biosynthesis; glycine biosynthesis; glycine from L-serine: step 1/1. Functionally, catalyzes the reversible interconversion of serine and glycine with tetrahydrofolate (THF) serving as the one-carbon carrier. This reaction serves as the major source of one-carbon groups required for the biosynthesis of purines, thymidylate, methionine, and other important biomolecules. Also exhibits THF-independent aldolase activity toward beta-hydroxyamino acids, producing glycine and aldehydes, via a retro-aldol mechanism. The sequence is that of Serine hydroxymethyltransferase from Ehrlichia ruminantium (strain Gardel).